The primary structure comprises 643 residues: E3 ubiquitin-protein ligase Praja-1 (643 aa).

The segment at 1–363 is disordered; sequence MGQESSKPVW…SDDYYKYCDE (363 aa). 3 stretches are compositionally biased toward basic and acidic residues: residues 95-105, 145-158, and 173-183; these read DYSRYPPREYR, KFKD…EKGA, and RDVREERDKLD. The segment covering 200 to 209 has biased composition (low complexity); sequence QSSVASQSSS. Positions 213 to 227 are enriched in basic and acidic residues; that stretch reads LATKGDSSERERREQ. Ser265 is subject to Phosphoserine. Thr277 bears the Phosphothreonine mark. Composition is skewed to basic and acidic residues over residues 289–310 and 320–362; these read RWRD…RGRG and KYPE…KYCD. 2 positions are modified to phosphoserine: Ser365 and Ser367. The segment at 380-454 is disordered; that stretch reads RSREQTLSSS…REPSLQEEQA (75 aa). Low complexity predominate over residues 410–439; sequence SASTGTSPGPGASASAGAGAGASAGSNGSN. The RING-type zinc finger occupies 595 to 636; the sequence is CPICCSEYVKGEVATELPCHHYFHKPCVSIWLQKSGTCPVCR.

In terms of assembly, binds ubiquitin-conjugating enzymes (E2s). In vitro, interacts with the ubiquitin-conjugating enzyme, UBE2D2. Substrate for E2-dependent ubiquitination. Expressed in various regions of the brain including the cerebellum, cerebral cortex, medulla, occipital pole, frontal lobe, temporal lobe and putamen. Highest levels in the cerebral cortex.

The catalysed reaction is S-ubiquitinyl-[E2 ubiquitin-conjugating enzyme]-L-cysteine + [acceptor protein]-L-lysine = [E2 ubiquitin-conjugating enzyme]-L-cysteine + N(6)-ubiquitinyl-[acceptor protein]-L-lysine.. Has E2-dependent E3 ubiquitin-protein ligase activity. Ubiquitinates MAGED1 antigen leading to its subsequent degradation by proteasome. May be involved in protein sorting. This is E3 ubiquitin-protein ligase Praja-1 (PJA1) from Homo sapiens (Human).